Here is a 689-residue protein sequence, read N- to C-terminus: Glycine--tRNA ligase beta subunit (689 aa).

Belongs to the class-II aminoacyl-tRNA synthetase family. In terms of assembly, tetramer of two alpha and two beta subunits.

Its subcellular location is the cytoplasm. It catalyses the reaction tRNA(Gly) + glycine + ATP = glycyl-tRNA(Gly) + AMP + diphosphate. The protein is Glycine--tRNA ligase beta subunit of Escherichia coli O127:H6 (strain E2348/69 / EPEC).